Consider the following 318-residue polypeptide: dTDP-6-deoxy-L-talose 4-dehydrogenase (NAD(P)(+)) (318 aa).

Residues 19–20, 60–61, asparagine 95, threonine 120, tyrosine 145, and lysine 149 contribute to the NAD(+) site; these read FI and DP. Threonine 120 and tyrosine 145 together coordinate substrate. Tyrosine 145 acts as the Proton acceptor in catalysis.

This sequence belongs to the NAD(P)-dependent epimerase/dehydratase family.

The catalysed reaction is dTDP-6-deoxy-beta-L-talose + NAD(+) = dTDP-4-dehydro-beta-L-rhamnose + NADH + H(+). It catalyses the reaction dTDP-6-deoxy-beta-L-talose + NADP(+) = dTDP-4-dehydro-beta-L-rhamnose + NADPH + H(+). Catalyzes the reduction of dTDP-6-deoxy-L-lyxo-4-hexulose to dTDP-6-deoxy-L-talose. Can use NAD(+) or NADP(+). The protein is dTDP-6-deoxy-L-talose 4-dehydrogenase (NAD(P)(+)) (tal) of Kitasatospora kifunensis (Streptomyces kifunensis).